The primary structure comprises 218 residues: 7-cyano-7-deazaguanine synthase (218 aa).

Tyr-9–Leu-19 provides a ligand contact to ATP. Zn(2+) contacts are provided by Cys-185, Cys-193, Cys-196, and Cys-199.

It belongs to the QueC family. Requires Zn(2+) as cofactor.

It catalyses the reaction 7-carboxy-7-deazaguanine + NH4(+) + ATP = 7-cyano-7-deazaguanine + ADP + phosphate + H2O + H(+). It participates in purine metabolism; 7-cyano-7-deazaguanine biosynthesis. In terms of biological role, catalyzes the ATP-dependent conversion of 7-carboxy-7-deazaguanine (CDG) to 7-cyano-7-deazaguanine (preQ(0)). The protein is 7-cyano-7-deazaguanine synthase of Alteromonas mediterranea (strain DSM 17117 / CIP 110805 / LMG 28347 / Deep ecotype).